Here is an 85-residue protein sequence, read N- to C-terminus: Elongation factor 1-beta (85 aa).

It belongs to the EF-1-beta/EF-1-delta family.

In terms of biological role, promotes the exchange of GDP for GTP in EF-1-alpha/GDP, thus allowing the regeneration of EF-1-alpha/GTP that could then be used to form the ternary complex EF-1-alpha/GTP/AAtRNA. The protein is Elongation factor 1-beta of Methanospirillum hungatei JF-1 (strain ATCC 27890 / DSM 864 / NBRC 100397 / JF-1).